The following is a 260-amino-acid chain: 14-3-3-like protein (260 aa).

Belongs to the 14-3-3 family.

This chain is 14-3-3-like protein, found in Pisum sativum (Garden pea).